A 971-amino-acid polypeptide reads, in one-letter code: Exportin-2 (971 aa).

The Importin N-terminal domain occupies 29 to 102; that stretch reads AEKYLESVEG…KSSIINLMLR (74 aa).

It belongs to the XPO2/CSE1 family.

The protein localises to the cytoplasm. The protein resides in the nucleus. Export receptor for importin alpha. Mediates importin-alpha re-export from the nucleus to the cytoplasm after import substrates have been released into the nucleoplasm. The sequence is that of Exportin-2 (cse1l) from Xenopus laevis (African clawed frog).